Here is a 143-residue protein sequence, read N- to C-terminus: Nucleoside diphosphate kinase (143 aa).

Residues lysine 11, phenylalanine 59, arginine 87, threonine 93, arginine 104, and asparagine 114 each contribute to the ATP site. The Pros-phosphohistidine intermediate role is filled by histidine 117.

The protein belongs to the NDK family. Homotetramer. Mg(2+) is required as a cofactor.

It localises to the cytoplasm. The catalysed reaction is a 2'-deoxyribonucleoside 5'-diphosphate + ATP = a 2'-deoxyribonucleoside 5'-triphosphate + ADP. It catalyses the reaction a ribonucleoside 5'-diphosphate + ATP = a ribonucleoside 5'-triphosphate + ADP. Its function is as follows. Major role in the synthesis of nucleoside triphosphates other than ATP. The ATP gamma phosphate is transferred to the NDP beta phosphate via a ping-pong mechanism, using a phosphorylated active-site intermediate. This Clostridium perfringens (strain ATCC 13124 / DSM 756 / JCM 1290 / NCIMB 6125 / NCTC 8237 / Type A) protein is Nucleoside diphosphate kinase.